The sequence spans 173 residues: Photosystem I assembly protein Ycf3 (173 aa).

TPR repeat units follow at residues 35-68, 72-105, and 120-153; these read AYVY…EENS, SETL…NPNQ, and GRIA…NPGG.

The protein belongs to the Ycf3 family.

The protein localises to the cellular thylakoid membrane. Its function is as follows. Essential for the assembly of the photosystem I (PSI) complex. May act as a chaperone-like factor to guide the assembly of the PSI subunits. This Synechococcus sp. (strain CC9605) protein is Photosystem I assembly protein Ycf3.